Reading from the N-terminus, the 329-residue chain is Ankyrin repeat and SOCS box protein 5 (329 aa).

ANK repeat units follow at residues 69–98 (ADRS…NVNA), 102–131 (DHVT…NANA), 135–164 (DGVT…KAQL), 167–196 (CFPS…DVDQ), 200–229 (HLGT…DVHK), and 232–261 (YWDT…DINA). Residues 278-329 (AVERILLQHEATPSSLCQLCRLCIRNYIGRQRFHLIPQLQLPTLLQNFLQYR) form the SOCS box domain.

Belongs to the ankyrin SOCS box (ASB) family.

Its pathway is protein modification; protein ubiquitination. Its function is as follows. May be a substrate-recognition component of a SCF-like ECS (Elongin-Cullin-SOCS-box protein) E3 ubiquitin-protein ligase complex which mediates the ubiquitination and subsequent proteasomal degradation of target proteins. May play a role in the initiation of arteriogenesis. The protein is Ankyrin repeat and SOCS box protein 5 (Asb5) of Mus musculus (Mouse).